The chain runs to 785 residues: Probable serine protease Ga0098714_109514 (785 aa).

Composition is skewed to basic and acidic residues over residues 470-481 and 491-501; these read LDHGKNGREGGR and DGPEHPNHYAD. Disordered regions lie at residues 470–503 and 608–629; these read LDHG…ADID and DGDA…EEVS.

Belongs to the peptidase S1 family.

In terms of biological role, probably a dedicated protease for substrate gasdermin bGSDM; cleaves the bGSDM precursor, releasing the pore-forming moiety, which integrates into the membrane and triggers cell death. Involved in defense against bacteriophages. Expression of gasdermin bGSDM and this neighboring protease is toxic in E.coli on solid medium. The sequence is that of Probable serine protease Ga0098714_109514 from Bradyrhizobium tropiciagri.